A 386-amino-acid polypeptide reads, in one-letter code: Cysteine protease Amb a 11.0101 (386 aa).

A signal peptide spans 1-22; that stretch reads MEINKLVCFSFSLVLILGLVES. Positions 6-20 are T-cell epitope. MHC class II peptide able to activate CD(4+) T cells of the ragweed pollen-allergic patients indicated by significantly increased IL-2 production compared to non-allergic individuals. Not recognized by IgE of the patients allergic to ragweed pollen; it reads LVCFSFSLVLILGLV. A propeptide spans 23–108 (activation peptide); it reads FHYHERELES…SKISHFQALR (86 aa). N-linked (GlcNAc...) (complex) asparagine glycosylation is present at Asn127. 3 disulfide bridges follow: Cys152–Cys193, Cys186–Cys226, and Cys283–Cys334. Cys155 is an active-site residue. Residues 173 to 186 are B-cell epitope. Binds to IgE of the patients allergic to ragweed pollen; that stretch reads GKLVKFSEQQLVDC. Residues His289 and Asn310 contribute to the active site. A disordered region spans residues 340 to 377; it reads SSFPIMNDPNPPKDDPNGPKDDPDAPKDPKFKTTQRLQ. Basic and acidic residues predominate over residues 350-370; sequence PPKDDPNGPKDDPDAPKDPKF. Positions 371–386 are cleaved as a propeptide — removed in mature form; that stretch reads KTTQRLQGIRTKLLEL.

It belongs to the peptidase C1 family. As to quaternary structure, homodimer. Autocatalytic proteolytic cleavage of N-terminal activation peptide. Post-translationally, N-glycosylated. Glycosylation is not required for binding to IgE. Expressed in pollen (at protein and mRNA level).

With respect to regulation, activated by L-cysteine. Inhibited by cysteine protease inhibitor E64 (L-trans-epoxysuccinyl-leucylamide-(4-guanido)-butane). Inhibited by cysteine/serine protease inhibitor leupeptin. Not inhibited by serine protease inhibitors 4-(2-aminoethyl)benzenesulfonyl fluoride hydrochloride (AEBSF) and phenylmethanesulfonyl fluoride (PMSF), metallo protease inhibitor bestatin or aspartic protease inhibitor pepstatin A. Cysteine protease. Hydrolyzes casein and synthetic peptide Boc-Val-Leu-Lys-7-amino-4-methylcoumarin (Boc-VLK-AMC) in vitro. The protein is Cysteine protease Amb a 11.0101 of Ambrosia artemisiifolia (Common ragweed).